Reading from the N-terminus, the 119-residue chain is Flagellar transcriptional regulator FlhD (119 aa).

The protein belongs to the FlhD family. Homodimer; disulfide-linked. Forms a heterohexamer composed of two FlhC and four FlhD subunits. Each FlhC binds a FlhD dimer, forming a heterotrimer, and a hexamer assembles by dimerization of two heterotrimers.

Its subcellular location is the cytoplasm. Functionally, functions in complex with FlhC as a master transcriptional regulator that regulates transcription of several flagellar and non-flagellar operons by binding to their promoter region. Activates expression of class 2 flagellar genes, including fliA, which is a flagellum-specific sigma factor that turns on the class 3 genes. Also regulates genes whose products function in a variety of physiological pathways. The protein is Flagellar transcriptional regulator FlhD of Pectobacterium atrosepticum (strain SCRI 1043 / ATCC BAA-672) (Erwinia carotovora subsp. atroseptica).